The following is a 764-amino-acid chain: Probable cyclic nucleotide-gated ion channel 20, chloroplastic (764 aa).

The transit peptide at M1–R25 directs the protein to the chloroplast. Residues M1–T40 form a disordered region. Low complexity predominate over residues S19 to S33. The Stromal portion of the chain corresponds to A26–T204. Residues K205–I225 traverse the membrane as a helical segment. At K226 to K242 the chain is on the lumenal side. Residues A243–F263 form a helical membrane-spanning segment. At R264–K295 the chain is on the stromal side. The helical transmembrane segment at F296 to P316 threads the bilayer. Over A317–N329 the chain is Lumenal. Residues L330 to L350 form a helical membrane-spanning segment. Residues A351 to N366 lie on the Stromal side of the membrane. The chain crosses the membrane as a helical span at residues F367–L387. The Lumenal portion of the chain corresponds to F388 to G488. A helical transmembrane segment spans residues E489–G509. Over N510–L764 the chain is Stromal. A nucleoside 3',5'-cyclic phosphate is bound by residues I593–T710 and E658. A calmodulin-binding region spans residues F713–D729. The region spanning R734–S763 is the IQ domain.

The protein belongs to the cyclic nucleotide-gated cation channel (TC 1.A.1.5) family. In terms of assembly, homotetramer or heterotetramer.

The protein resides in the plastid. Its subcellular location is the chloroplast thylakoid membrane. Functionally, probable cyclic nucleotide-gated ion channel. In Arabidopsis thaliana (Mouse-ear cress), this protein is Probable cyclic nucleotide-gated ion channel 20, chloroplastic (CNGC20).